The following is a 529-amino-acid chain: Peptide chain release factor 3 (529 aa).

A tr-type G domain is found at 11-280; sequence AKRRTFAIIS…GLVEWAPAPM (270 aa). Residues 20-27, 88-92, and 142-145 each bind GTP; these read SHPDAGKT, DTPGH, and NKLD.

The protein belongs to the TRAFAC class translation factor GTPase superfamily. Classic translation factor GTPase family. PrfC subfamily.

The protein resides in the cytoplasm. Functionally, increases the formation of ribosomal termination complexes and stimulates activities of RF-1 and RF-2. It binds guanine nucleotides and has strong preference for UGA stop codons. It may interact directly with the ribosome. The stimulation of RF-1 and RF-2 is significantly reduced by GTP and GDP, but not by GMP. This chain is Peptide chain release factor 3, found in Shigella sonnei (strain Ss046).